An 89-amino-acid chain; its full sequence is Small ribosomal subunit protein uS15 (89 aa).

This sequence belongs to the universal ribosomal protein uS15 family. In terms of assembly, part of the 30S ribosomal subunit. Forms a bridge to the 50S subunit in the 70S ribosome, contacting the 23S rRNA.

Functionally, one of the primary rRNA binding proteins, it binds directly to 16S rRNA where it helps nucleate assembly of the platform of the 30S subunit by binding and bridging several RNA helices of the 16S rRNA. In terms of biological role, forms an intersubunit bridge (bridge B4) with the 23S rRNA of the 50S subunit in the ribosome. This chain is Small ribosomal subunit protein uS15, found in Mycobacterium marinum (strain ATCC BAA-535 / M).